Consider the following 172-residue polypeptide: MSSSQNNNSSWIDWFLGIKGNQFLCRVPTDYVQDTFNQMGLEYFSEILDVILKPVIDSSSGLLYGDEKKWYGMIHARYIRSERGLIAMHRKYLRGDFGSCPNISCDRQNTLPVGLSAVWGKSTVKIHCPRCKSNFHPKSDTQLDGAMFGPSFPDIFFSMLPNLTSPLDDPRT.

The protein belongs to the casein kinase 2 subunit beta family. As to quaternary structure, interacts in vitro with the casein kinase 2 alpha subunit (CkII-alpha). The relevance of such interaction is however unclear in vivo. As to expression, probably not expressed in wild-type flies. In males lacking the Y chromosome, it is testis-specific and constitutes the main component of star-shaped crystals.

Functionally, unknown. In males lacking the Y chromosome, its strong overexpression leads to the appearance of proteinaceous star-shaped crystals in the primary spermatocytes causing meiotic drive, possibly by interfering with normal casein kinase 2 activity. The chain is Stellate protein CG33236/CG33240/CG33244/CG33245 (Ste:CG33236) from Drosophila melanogaster (Fruit fly).